The following is a 735-amino-acid chain: FHF complex subunit HOOK-interacting protein 2B (735 aa).

Residues 183–229 (SSSTSDEAAEKDCSGSSSPERASSPSSSSSACSLLSRSGAHPVSSPQ) form a disordered region. The segment covering 196 to 221 (SGSSSPERASSPSSSSSACSLLSRSG) has biased composition (low complexity).

This sequence belongs to the FHIP family.

This chain is FHF complex subunit HOOK-interacting protein 2B (fhip2b), found in Danio rerio (Zebrafish).